Here is a 350-residue protein sequence, read N- to C-terminus: Arginine N-succinyltransferase (350 aa).

Position 125 (L125) interacts with succinyl-CoA. The Proton donor role is filled by H229.

This sequence belongs to the arginine N-succinyltransferase family.

It carries out the reaction succinyl-CoA + L-arginine = N(2)-succinyl-L-arginine + CoA + H(+). The protein operates within amino-acid degradation; L-arginine degradation via AST pathway; L-glutamate and succinate from L-arginine: step 1/5. Its function is as follows. Catalyzes the transfer of succinyl-CoA to arginine to produce N(2)-succinylarginine. In Yersinia pseudotuberculosis serotype IB (strain PB1/+), this protein is Arginine N-succinyltransferase.